We begin with the raw amino-acid sequence, 1108 residues long: Probable E3 ubiquitin ligase SUD1 (1108 aa).

A disordered region spans residues 1 to 60 (MEISPADSLSISGAAASEVVSEPSVSSSSSSSSPNQASPNPFSNMDPAVSTATGSRYVDD). A compositionally biased stretch (low complexity) spans 10 to 44 (SISGAAASEVVSEPSVSSSSSSSSPNQASPNPFSN). An RING-CH-type zinc finger spans residues 60-121 (DDEDEEDVCR…EVCKHPFSFS (62 aa)). Cys-68, Cys-71, Cys-85, Cys-87, His-95, Cys-98, Cys-111, and Cys-114 together coordinate Zn(2+). Helical transmembrane passes span 157–177 (FVLSVWLLTIPFITFWIWRLA) and 197–217 (VILTDCLHGFLLSASIVFIFL). The segment covering 237–246 (ERDDDVDRNG) has biased composition (basic and acidic residues). The tract at residues 237-273 (ERDDDVDRNGARAARRPAGQANRNLAGEGNGEDAGDQ) is disordered. Residues 286 to 308 (ENVLARLDIQAARLEAQVEQMFD) are a coiled coil. 8 helical membrane-spanning segments follow: residues 339–359 (FTVLASNMIFLGVVIFVPFTL), 362–382 (IILYHVSWLFAAARGPAVAAS), 462–482 (AVGYMFIVFLVFLYLGIIALI), 489–509 (PLTVGRFYGIASIVEAVPSLL), 525–545 (VAFLLVIELGVFPLMCGWWLD), 572–592 (LVHWVVGIMYMLQISIFVSLL), 630–650 (VLLSVAVYGSLIVMLVFLPVK), and 669–689 (PFTEIPADMLLFQICIPFIIE). The segment at 762-784 (PNRSRLRAGNVNTGEEYEDDDEQ) is disordered. 6 consecutive transmembrane segments (helical) span residues 796–816 (IILLLLVAWVTLLLFNSALIV), 844–864 (YAFVIGTYAFWTTISGARYAI), 894–914 (AIWVFIIPVLIGLLFELLVIV), 923–943 (SPVFLLYQDWALGLIFLKIWT), 982–1002 (EIVFPIVMKLLTALCVPYVLA), and 1017–1036 (SAVYRFAWIGCLSVSLFCFC).

As to expression, expressed in cotyledons, leaves, roots, stems, inflorescences and siliques. Expression higher at the top than at the base of the stem.

It is found in the membrane. The enzyme catalyses S-ubiquitinyl-[E2 ubiquitin-conjugating enzyme]-L-cysteine + [acceptor protein]-L-lysine = [E2 ubiquitin-conjugating enzyme]-L-cysteine + N(6)-ubiquitinyl-[acceptor protein]-L-lysine.. The protein operates within protein modification; protein ubiquitination. In terms of biological role, probable E3 ubiquitin ligase acting as a positive post-transcriptional regulator of 3-hydroxy-3-methylglutaryl-coenzyme A reductase activity. Might be involved in the quality control that degrades misfolded proteins. The polypeptide is Probable E3 ubiquitin ligase SUD1 (SUD1) (Arabidopsis thaliana (Mouse-ear cress)).